Reading from the N-terminus, the 226-residue chain is 7-cyano-7-deazaguanine synthase (226 aa).

9-19 (YSGGLDSTTCL) serves as a coordination point for ATP. 4 residues coordinate Zn(2+): C189, C199, C202, and C205.

It belongs to the QueC family. Zn(2+) serves as cofactor.

It catalyses the reaction 7-carboxy-7-deazaguanine + NH4(+) + ATP = 7-cyano-7-deazaguanine + ADP + phosphate + H2O + H(+). Its pathway is purine metabolism; 7-cyano-7-deazaguanine biosynthesis. Catalyzes the ATP-dependent conversion of 7-carboxy-7-deazaguanine (CDG) to 7-cyano-7-deazaguanine (preQ(0)). The polypeptide is 7-cyano-7-deazaguanine synthase (Pelobacter propionicus (strain DSM 2379 / NBRC 103807 / OttBd1)).